The primary structure comprises 150 residues: 3-hydroxyacyl-[acyl-carrier-protein] dehydratase FabZ (150 aa).

His-54 is an active-site residue.

The protein belongs to the thioester dehydratase family. FabZ subfamily.

The protein localises to the cytoplasm. The catalysed reaction is a (3R)-hydroxyacyl-[ACP] = a (2E)-enoyl-[ACP] + H2O. Involved in unsaturated fatty acids biosynthesis. Catalyzes the dehydration of short chain beta-hydroxyacyl-ACPs and long chain saturated and unsaturated beta-hydroxyacyl-ACPs. The polypeptide is 3-hydroxyacyl-[acyl-carrier-protein] dehydratase FabZ (Colwellia psychrerythraea (strain 34H / ATCC BAA-681) (Vibrio psychroerythus)).